Reading from the N-terminus, the 370-residue chain is 3-isopropylmalate dehydrogenase 2 (370 aa).

Residue 77-90 participates in NAD(+) binding; sequence GPKWDAVPYEVRPE. Positions 97, 107, 135, and 226 each coordinate substrate. The Mg(2+) site is built by D226, D250, and D254. 290–302 is a binding site for NAD(+); that stretch reads GSAPDIAGKGLAN.

The protein belongs to the isocitrate and isopropylmalate dehydrogenases family. LeuB type 1 subfamily. As to quaternary structure, homodimer. Mg(2+) serves as cofactor. The cofactor is Mn(2+).

It localises to the cytoplasm. The catalysed reaction is (2R,3S)-3-isopropylmalate + NAD(+) = 4-methyl-2-oxopentanoate + CO2 + NADH. It functions in the pathway amino-acid biosynthesis; L-leucine biosynthesis; L-leucine from 3-methyl-2-oxobutanoate: step 3/4. Its function is as follows. Catalyzes the oxidation of 3-carboxy-2-hydroxy-4-methylpentanoate (3-isopropylmalate) to 3-carboxy-4-methyl-2-oxopentanoate. The product decarboxylates to 4-methyl-2 oxopentanoate. This is 3-isopropylmalate dehydrogenase 2 from Bradyrhizobium diazoefficiens (strain JCM 10833 / BCRC 13528 / IAM 13628 / NBRC 14792 / USDA 110).